A 496-amino-acid polypeptide reads, in one-letter code: Maturase K (496 aa).

It belongs to the intron maturase 2 family. MatK subfamily.

It is found in the plastid. The protein localises to the chloroplast. In terms of biological role, usually encoded in the trnK tRNA gene intron. Probably assists in splicing its own and other chloroplast group II introns. This Paeonia cambessedesii (Majorcan peony) protein is Maturase K.